The sequence spans 272 residues: Small ribosomal subunit protein uS2 (272 aa).

The interval 251-272 is disordered; it reads LLTEGAPAAEAPAEAEGETKAE. Residues 253 to 264 show a composition bias toward low complexity; it reads TEGAPAAEAPAE.

The protein belongs to the universal ribosomal protein uS2 family.

This is Small ribosomal subunit protein uS2 from Bifidobacterium adolescentis (strain ATCC 15703 / DSM 20083 / NCTC 11814 / E194a).